The following is a 60-amino-acid chain: uncharacterized protein (60 aa).

An N-terminal signal peptide occupies residues 1 to 21 (MNKLLKLFFITIIIYNNIAFA).

This is an uncharacterized protein from Rickettsia prowazekii (strain Madrid E).